The sequence spans 86 residues: MSILDYFRSSKKPNTASLAKERLQIIVAHQRGERGAPDYFPKMKQEIIEVIRKYVQISDDQVSVQLDQNDDNLSVLELNVTLPDSK.

It belongs to the MinE family.

Functionally, prevents the cell division inhibition by proteins MinC and MinD at internal division sites while permitting inhibition at polar sites. This ensures cell division at the proper site by restricting the formation of a division septum at the midpoint of the long axis of the cell. The sequence is that of Cell division topological specificity factor from Shewanella frigidimarina (strain NCIMB 400).